The primary structure comprises 251 residues: Early E1A protein (251 aa).

The interval 38–46 (ISLHNLFDV) is interaction with RB1 in competition with E2F1. Residues 74-136 (SADSGAASGD…NYVNIAEGAS (63 aa)) form an interaction with UBE2I region. Residues 97–101 (LKCYE) carry the LXCXE motif, interaction with host RB1 and TMEM173/STING motif. The disordered stretch occupies residues 102-122 (EGLPPSGSEADEAEERAEEEE). Over residues 110-122 (EADEAEERAEEEE) the composition is skewed to acidic residues. A zinc finger lies at 150-170 (CRACDFHRGSSGNPEAMCALC). Residues 240–244 (PLNLS) carry the PXDLS motif, CTBP-binding motif. Residues 246-250 (KRPKS) carry the Nuclear localization signal motif.

Belongs to the adenoviridae E1A protein family. Interacts with host UBE2I; this interaction interferes with polySUMOylation. Interacts with host RB1; this interaction induces the aberrant dissociation of RB1-E2F1 complex thereby disrupting the activity of RB1 and activating E2F1-regulated genes. Interacts with host ATF7; the interaction enhances ATF7-mediated viral transactivation activity which requires the zinc binding domains of both proteins. Isoform early E1A 32 kDa protein and isoform early E1A 26 kDa protein interact (via N-terminus) with CUL1 and E3 ubiquitin ligase RBX1; these interactions inhibit RBX1-CUL1-dependent elongation reaction of ubiquitin chains and attenuate ubiquitination of SCF(FBXW7) target proteins. Interacts (via PXLXP motif) with host ZMYND11/BS69 (via MYND-type zinc finger); this interaction inhibits E1A mediated transactivation. Interacts with host EP300; this interaction stimulates the acetylation of RB1 by recruiting EP300 and RB1 into a multimeric-protein complex. Interacts with host CTBP1 and CTBP2; this interaction seems to potentiate viral replication. Interacts with host DCAF7. Interacts with host DYRK1A. Interacts with host KPNA4; this interaction allows E1A import into the host nucleus. Interacts with host EP400; this interaction stabilizes MYC. Interacts with host TBP protein; this interaction probably disrupts the TBP-TATA complex. Interacts (via LXCXE motif) with host TMEM173/STING; this interaction impairs the ability of TMEM173/STING to sense cytosolic DNA and promote the production of type I interferon (IFN-alpha and IFN-beta). Interacts (via C-terminus) with host ZBED1/hDREF (via C-terminus); the interaction is direct.

It is found in the host nucleus. In terms of biological role, plays a role in viral genome replication by driving entry of quiescent cells into the cell cycle. Stimulation of progression from G1 to S phase allows the virus to efficiently use the cellular DNA replicating machinery to achieve viral genome replication. E1A protein has both transforming and trans-activating activities. Induces the disassembly of the E2F1 transcription factor from RB1 by direct competition for the same binding site on RB1, with subsequent transcriptional activation of E2F1-regulated S-phase genes and of the E2 region of the adenoviral genome. Release of E2F1 leads to the ARF-mediated inhibition of MDM2 and causes TP53/p53 to accumulate because it is not targeted for degradation by MDM2-mediated ubiquitination anymore. This increase in TP53, in turn, would arrest the cell proliferation and direct its death but this effect is counteracted by the viral protein E1B-55K. Inactivation of the ability of RB1 to arrest the cell cycle is critical for cellular transformation, uncontrolled cellular growth and proliferation induced by viral infection. Interaction with RBX1 and CUL1 inhibits ubiquitination of the proteins targeted by SCF(FBXW7) ubiquitin ligase complex, and may be linked to unregulated host cell proliferation. The tumorigenesis-restraining activity of E1A may be related to the disruption of the host CtBP-CtIP complex through the CtBP binding motif. Interaction with host TMEM173/STING impairs the ability of TMEM173/STING to sense cytosolic DNA and promote the production of type I interferon (IFN-alpha and IFN-beta). Promotes the sumoylation of host ZBED1/hDREF with SUMO1. This chain is Early E1A protein, found in Human adenovirus F serotype 41 (HAdV-41).